A 456-amino-acid polypeptide reads, in one-letter code: tRNA-2-methylthio-N(6)-dimethylallyladenosine synthase (456 aa).

One can recognise an MTTase N-terminal domain in the interval K9–S126. Residues C18, C55, C89, C163, C167, and C170 each coordinate [4Fe-4S] cluster. The Radical SAM core domain occupies D149–A381. The TRAM domain occupies R384–A448.

It belongs to the methylthiotransferase family. MiaB subfamily. As to quaternary structure, monomer. [4Fe-4S] cluster serves as cofactor.

The protein resides in the cytoplasm. The enzyme catalyses N(6)-dimethylallyladenosine(37) in tRNA + (sulfur carrier)-SH + AH2 + 2 S-adenosyl-L-methionine = 2-methylsulfanyl-N(6)-dimethylallyladenosine(37) in tRNA + (sulfur carrier)-H + 5'-deoxyadenosine + L-methionine + A + S-adenosyl-L-homocysteine + 2 H(+). Functionally, catalyzes the methylthiolation of N6-(dimethylallyl)adenosine (i(6)A), leading to the formation of 2-methylthio-N6-(dimethylallyl)adenosine (ms(2)i(6)A) at position 37 in tRNAs that read codons beginning with uridine. The polypeptide is tRNA-2-methylthio-N(6)-dimethylallyladenosine synthase (Cellvibrio japonicus (strain Ueda107) (Pseudomonas fluorescens subsp. cellulosa)).